The following is a 93-amino-acid chain: Defensin alpha 4 (93 aa).

Positions 1–19 are cleaved as a signal peptide; the sequence is MRTLTLLITLLLLALHTQA. The propeptide occupies 20–62; the sequence is ESPQERAKAAPDQDMVMEDQDIFISFGGYKGTVLQDAVVKAGQ. 3 cysteine pairs are disulfide-bonded: Cys-64/Cys-92, Cys-66/Cys-81, and Cys-71/Cys-91.

It belongs to the alpha-defensin family. As to expression, expressed in neutrophils (at protein level). Highest expression in bone marrow and to a much lesser extent in small intestine.

Its subcellular location is the secreted. Its function is as follows. Host-defense peptide that has antimicrobial activity against Gram-positive and Gram-negative bacteria and fungi (in vitro). Exhibits activity against E.coli, A.calcoaceticus, S,aureus and C.albicans. The protein is Defensin alpha 4 of Rattus norvegicus (Rat).